The following is a 303-amino-acid chain: Coenzyme PQQ synthesis protein B (303 aa).

The protein belongs to the PqqB family.

The protein operates within cofactor biosynthesis; pyrroloquinoline quinone biosynthesis. In terms of biological role, may be involved in the transport of PQQ or its precursor to the periplasm. The sequence is that of Coenzyme PQQ synthesis protein B from Acinetobacter baumannii (strain AYE).